We begin with the raw amino-acid sequence, 333 residues long: Dipeptide transport system permease protein DppB (333 aa).

6 helical membrane-spanning segments follow: residues 10–30, 99–119, 130–150, 197–217, 256–276, and 300–320; these read LLLI…IHLI, IELT…AGIV, YLSM…LALM, SIKH…AIIA, LIPV…GAIL, and PVIQ…NLFV. The ABC transmembrane type-1 domain occupies 95–324; sequence LAATIELTIF…LINLFVDLLY (230 aa).

Belongs to the binding-protein-dependent transport system permease family. OppBC subfamily.

It is found in the cell membrane. In terms of biological role, probably part of the ABC transporter Dpp involved in dipeptide transport. Responsible for the translocation of the substrate across the membrane. The polypeptide is Dipeptide transport system permease protein DppB (dppB) (Alkalihalophilus pseudofirmus (strain ATCC BAA-2126 / JCM 17055 / OF4) (Bacillus pseudofirmus)).